We begin with the raw amino-acid sequence, 754 residues long: 5-methyltetrahydropteroyltriglutamate--homocysteine methyltransferase (754 aa).

5-methyltetrahydropteroyltri-L-glutamate contacts are provided by residues 19-22 (RELK) and Lys-121. L-homocysteine-binding positions include 423-425 (IGS) and Glu-476. Residues 423-425 (IGS) and Glu-476 each bind L-methionine. Residues 507 to 508 (RC) and Trp-553 contribute to the 5-methyltetrahydropteroyltri-L-glutamate site. Asp-591 serves as a coordination point for L-homocysteine. Asp-591 provides a ligand contact to L-methionine. Glu-597 is a 5-methyltetrahydropteroyltri-L-glutamate binding site. His-633, Cys-635, and Glu-657 together coordinate Zn(2+). His-686 (proton donor) is an active-site residue. Zn(2+) is bound at residue Cys-718.

This sequence belongs to the vitamin-B12 independent methionine synthase family. The cofactor is Zn(2+).

The catalysed reaction is 5-methyltetrahydropteroyltri-L-glutamate + L-homocysteine = tetrahydropteroyltri-L-glutamate + L-methionine. It participates in amino-acid biosynthesis; L-methionine biosynthesis via de novo pathway; L-methionine from L-homocysteine (MetE route): step 1/1. In terms of biological role, catalyzes the transfer of a methyl group from 5-methyltetrahydrofolate to homocysteine resulting in methionine formation. This chain is 5-methyltetrahydropteroyltriglutamate--homocysteine methyltransferase, found in Corynebacterium efficiens (strain DSM 44549 / YS-314 / AJ 12310 / JCM 11189 / NBRC 100395).